We begin with the raw amino-acid sequence, 229 residues long: Ras-related protein Rab-33B (229 aa).

Asn-43, Val-44, Gly-45, Lys-46, Thr-47, Cys-48, Thr-62, and Thr-65 together coordinate GTP. Residue Thr-47 coordinates Mg(2+). The Switch 1 signature appears at 56–68; that stretch reads GRFPDRTEATIGV. 2 residues coordinate Mg(2+): Thr-65 and Asp-88. The Switch 2 motif lies at 89-108; that stretch reads TAGQERFRKSMVQHYYRNVH. Gly-91, Asn-148, Lys-149, Asp-151, Ala-179, and Lys-180 together coordinate GTP. S-geranylgeranyl cysteine attachment occurs at residues Cys-227 and Cys-229. Position 229 is a cysteine methyl ester (Cys-229).

This sequence belongs to the small GTPase superfamily. Rab family. As to quaternary structure, interacts (GTP- and GDP-bound forms) with ATG16L1; the complex consists of a tetramer where two RAB33B molecules bind independently one molecule of the ATG16L1 homodimer; the interaction promotes ATG12-ATG5-ATG16L1 complex recruitment to phagophores. Interacts with ATG16L2; however interaction is approximately hundred times lower than for ATG16L1. Interacts with RIC1 (via C-terminus domain); the interaction is direct with a preference for RAB33B-GTP. Interacts with RGP1. Mg(2+) serves as cofactor. Prenylated. As to expression, ubiquitous.

The protein resides in the golgi apparatus membrane. It localises to the golgi apparatus. Its subcellular location is the cis-Golgi network. It is found in the preautophagosomal structure membrane. The enzyme catalyses GTP + H2O = GDP + phosphate + H(+). Its activity is regulated as follows. Regulated by guanine nucleotide exchange factors (GEFs) which promote the exchange of bound GDP for free GTP. Regulated by GTPase activating proteins (GAPs) such as SGSM2 which increase the GTP hydrolysis activity. Inhibited by GDP dissociation inhibitors (GDIs). Its function is as follows. The small GTPases Rab are key regulators of intracellular membrane trafficking, from the formation of transport vesicles to their fusion with membranes. Rabs cycle between an inactive GDP-bound form and an active GTP-bound form that is able to recruit to membranes different sets of downstream effectors directly responsible for vesicle formation, movement, tethering and fusion. RAB33B acts, in coordination with RAB6A, to regulate intra-Golgi retrograde trafficking. Participates in autophagosome formation by recruiting the ATG12-ATG5-ATG16L1 complex to phagophores, probably in a nucleotide-independent manner. This chain is Ras-related protein Rab-33B, found in Mus musculus (Mouse).